We begin with the raw amino-acid sequence, 157 residues long: Immediate-early protein ICP-18 (157 aa).

This Frog virus 3 (isolate Goorha) (FV-3) protein is Immediate-early protein ICP-18.